An 894-amino-acid polypeptide reads, in one-letter code: Probable cytoplasmic aconitate hydratase (894 aa).

Substrate is bound by residues Gln87 and 207 to 209; that span reads DSH. Cys438, Cys504, and Cys507 together coordinate [4Fe-4S] cluster. Substrate contacts are provided by residues Arg537, Arg542, and 781–782; that span reads SR.

Belongs to the aconitase/IPM isomerase family. [4Fe-4S] cluster serves as cofactor.

The protein resides in the cytoplasm. The protein localises to the cytosol. It carries out the reaction citrate = D-threo-isocitrate. In terms of biological role, catalyzes the isomerization of citrate to isocitrate via cis-aconitate. The chain is Probable cytoplasmic aconitate hydratase (aco1) from Dictyostelium discoideum (Social amoeba).